The following is a 578-amino-acid chain: Palmitoyltransferase ZDHHC1 (578 aa).

Residues M1–Q41 lie on the Cytoplasmic side of the membrane. A helical membrane pass occupies residues F42–L62. The Lumenal portion of the chain corresponds to L63–G71. A helical transmembrane segment spans residues Y72 to I92. At D93–S174 the chain is on the cytoplasmic side. The region spanning E121 to I173 is the DHHC domain. C153 functions as the S-palmitoyl cysteine intermediate in the catalytic mechanism. A helical membrane pass occupies residues A175–L195. Residues D196–P230 are Lumenal-facing. The chain crosses the membrane as a helical span at residues A231 to G251. Over H252–A578 the chain is Cytoplasmic. Positions Q278–P288 are enriched in basic and acidic residues. Disordered stretches follow at residues Q278–N298, H345–V376, S497–R517, and S532–A578. Residues P363 to V376 show a composition bias toward basic residues. The segment covering A552–K561 has biased composition (basic residues).

It belongs to the DHHC palmitoyltransferase family.

Its subcellular location is the endosome membrane. The protein resides in the endoplasmic reticulum membrane. The protein localises to the golgi apparatus. It catalyses the reaction L-cysteinyl-[protein] + hexadecanoyl-CoA = S-hexadecanoyl-L-cysteinyl-[protein] + CoA. Functionally, palmitoyltransferase that catalyzes the addition of palmitate onto various protein substrates, such as ncdn and nlrp3. The protein is Palmitoyltransferase ZDHHC1 of Danio rerio (Zebrafish).